We begin with the raw amino-acid sequence, 349 residues long: Dihydroorotate dehydrogenase (quinone) (349 aa).

FMN contacts are provided by residues 67–71 (AGLDK) and Thr-91. Residue Lys-71 participates in substrate binding. 116-120 (NRLGF) is a binding site for substrate. Asn-147 and Asn-180 together coordinate FMN. Asn-180 lines the substrate pocket. The active-site Nucleophile is Ser-183. A substrate-binding site is contributed by Asn-185. The FMN site is built by Lys-225 and Thr-253. 254–255 (NT) contacts substrate. FMN contacts are provided by residues Gly-276, Gly-305, and 326-327 (YT).

This sequence belongs to the dihydroorotate dehydrogenase family. Type 2 subfamily. Monomer. The cofactor is FMN.

The protein resides in the cell membrane. The catalysed reaction is (S)-dihydroorotate + a quinone = orotate + a quinol. It functions in the pathway pyrimidine metabolism; UMP biosynthesis via de novo pathway; orotate from (S)-dihydroorotate (quinone route): step 1/1. Its function is as follows. Catalyzes the conversion of dihydroorotate to orotate with quinone as electron acceptor. This Bordetella avium (strain 197N) protein is Dihydroorotate dehydrogenase (quinone).